Reading from the N-terminus, the 515-residue chain is Endoglucanase 2 (515 aa).

An N-terminal signal peptide occupies residues Met1–Thr31. Asn37 carries N-linked (GlcNAc...) asparagine glycosylation. The active-site Nucleophile is Asp100. Asn250 carries an N-linked (GlcNAc...) asparagine glycan. His433 is an active-site residue. Asn475 carries N-linked (GlcNAc...) asparagine glycosylation. Asp480 is a catalytic residue. A glycan (N-linked (GlcNAc...) asparagine) is linked at Asn483. Residue Glu489 is part of the active site.

It belongs to the glycosyl hydrolase 9 (cellulase E) family.

It localises to the secreted. It carries out the reaction Endohydrolysis of (1-&gt;4)-beta-D-glucosidic linkages in cellulose, lichenin and cereal beta-D-glucans.. The polypeptide is Endoglucanase 2 (Arabidopsis thaliana (Mouse-ear cress)).